A 100-amino-acid polypeptide reads, in one-letter code: Urease subunit gamma (100 aa).

The protein belongs to the urease gamma subunit family. In terms of assembly, heterotrimer of UreA (gamma), UreB (beta) and UreC (alpha) subunits. Three heterotrimers associate to form the active enzyme.

It localises to the cytoplasm. It catalyses the reaction urea + 2 H2O + H(+) = hydrogencarbonate + 2 NH4(+). Its pathway is nitrogen metabolism; urea degradation; CO(2) and NH(3) from urea (urease route): step 1/1. This Ruegeria sp. (strain TM1040) (Silicibacter sp.) protein is Urease subunit gamma.